Reading from the N-terminus, the 155-residue chain is Endoribonuclease YbeY (155 aa).

3 residues coordinate Zn(2+): H114, H118, and H124.

The protein belongs to the endoribonuclease YbeY family. Zn(2+) serves as cofactor.

It localises to the cytoplasm. Its function is as follows. Single strand-specific metallo-endoribonuclease involved in late-stage 70S ribosome quality control and in maturation of the 3' terminus of the 16S rRNA. This Escherichia coli O7:K1 (strain IAI39 / ExPEC) protein is Endoribonuclease YbeY.